A 393-amino-acid chain; its full sequence is S-adenosylmethionine synthase 2 (393 aa).

Glu-9 lines the Mg(2+) pocket. His-15 is a binding site for ATP. Residue Glu-43 participates in K(+) binding. L-methionine contacts are provided by Glu-56 and Gln-99. Residues 167–169 (DGK), 235–238 (SGRF), Asp-246, 252–253 (RK), Ala-269, Lys-273, and Lys-277 contribute to the ATP site. Asp-246 contacts L-methionine. Lys-277 lines the L-methionine pocket.

This sequence belongs to the AdoMet synthase family. In terms of assembly, homotetramer. Interacts with GRF3. The cofactor is Mn(2+). Requires Mg(2+) as cofactor. It depends on Co(2+) as a cofactor. K(+) serves as cofactor. In terms of tissue distribution, highly expressed in stems and roots. Detected in trichomes (at the protein level).

The protein localises to the cytoplasm. It carries out the reaction L-methionine + ATP + H2O = S-adenosyl-L-methionine + phosphate + diphosphate. It functions in the pathway amino-acid biosynthesis; S-adenosyl-L-methionine biosynthesis; S-adenosyl-L-methionine from L-methionine: step 1/1. Inhibited by 5,5'-dithiobis-2-nitrobenzoic acid (DTNB) and N-ethylmaleimide (NEM) (in vitro). In terms of biological role, catalyzes the formation of S-adenosylmethionine from methionine and ATP. The reaction comprises two steps that are both catalyzed by the same enzyme: formation of S-adenosylmethionine (AdoMet) and triphosphate, and subsequent hydrolysis of the triphosphate. This is S-adenosylmethionine synthase 2 (SAM2) from Arabidopsis thaliana (Mouse-ear cress).